Consider the following 130-residue polypeptide: Anti-adapter protein IraD (130 aa).

It belongs to the GpW/Gp25 family. IraD subfamily. In terms of assembly, interacts with RssB.

Its subcellular location is the cytoplasm. In terms of biological role, inhibits RpoS proteolysis by regulating RssB activity, thereby increasing the stability of the sigma stress factor RpoS during oxidative stress. Its effect on RpoS stability is due to its interaction with RssB, which probably blocks the interaction of RssB with RpoS, and the consequent delivery of the RssB-RpoS complex to the ClpXP protein degradation pathway. This Escherichia coli O7:K1 (strain IAI39 / ExPEC) protein is Anti-adapter protein IraD.